A 103-amino-acid polypeptide reads, in one-letter code: Small ribosomal subunit protein uS10 (103 aa).

It belongs to the universal ribosomal protein uS10 family. In terms of assembly, part of the 30S ribosomal subunit.

In terms of biological role, involved in the binding of tRNA to the ribosomes. In Chlorobium luteolum (strain DSM 273 / BCRC 81028 / 2530) (Pelodictyon luteolum), this protein is Small ribosomal subunit protein uS10.